A 595-amino-acid chain; its full sequence is uncharacterized protein (595 aa).

3 disordered regions span residues 50–159 (VNPS…KTKK), 398–430 (TYPT…PPSL), and 450–595 (VTEG…SLDK). Residues 83–122 (SNKSSALKKSNKSSNKSSNKSSNKSSNKSSNKSSNKSSNK) are compositionally biased toward low complexity. A compositionally biased stretch (basic and acidic residues) spans 123-132 (FPDKSDKSDS). Residues 137–146 (DNSDDSDDSS) show a composition bias toward acidic residues. The segment covering 398–409 (TYPTTPLFSEPT) has biased composition (low complexity). Residues 410–420 (IPKPPQQPTTE) show a composition bias toward pro residues. The span at 421–430 (PPSGFKPPSL) shows a compositional bias: low complexity. The segment covering 454–463 (KVVESDDHTS) has biased composition (basic and acidic residues). Over residues 467 to 476 (IPPPPPPPPS) the composition is skewed to pro residues. The span at 477–529 (ISSDNSSPNKSVKSSTKSSTKSSTKSSTKSSTKSSTKSPSKTPVKSPIKSSSK) shows a compositional bias: low complexity. Residues 530–542 (LSDKKSPTKKIES) show a composition bias toward basic and acidic residues. Positions 544–553 (GESDSESDSE) are enriched in acidic residues. The span at 559 to 570 (TKKSTNKIKKIT) shows a compositional bias: basic residues. Residues 571–580 (NNKLENSNTK) are compositionally biased toward low complexity. Over residues 581–595 (NNKKFSKKKTISLDK) the composition is skewed to basic residues.

This is an uncharacterized protein from Acanthamoeba polyphaga mimivirus (APMV).